The primary structure comprises 710 residues: Subtilisin-like protease SBT4.8 (710 aa).

A signal peptide spans 1–23 (MVKRASFCLLSCLIILFLSSVSA). The propeptide at 24 to 111 (IIYDPQDKQV…VFRSKNYKLQ (88 aa)) is activation peptide. Residues 33 to 110 (VYVVYMGSLP…SVFRSKNYKL (78 aa)) enclose the Inhibitor I9 domain. Residues 115-559 (SWDFMGMKEG…AGHVDPIAAI (445 aa)) enclose the Peptidase S8 domain. Catalysis depends on D143, which acts as the Charge relay system. The N-linked (GlcNAc...) asparagine glycan is linked to N174. H198 serves as the catalytic Charge relay system. 3 N-linked (GlcNAc...) asparagine glycosylation sites follow: N221, N364, and N419. The PA domain maps to 354 to 414 (KYPLEYGDYL…VLSQDDFDSL (61 aa)). S498 (charge relay system) is an active-site residue. 5 N-linked (GlcNAc...) asparagine glycosylation sites follow: N535, N568, N580, N618, and N636.

Belongs to the peptidase S8 family. Post-translationally, the C-terminal propeptide is autocleaved.

It localises to the secreted. The chain is Subtilisin-like protease SBT4.8 from Arabidopsis thaliana (Mouse-ear cress).